We begin with the raw amino-acid sequence, 161 residues long: Nuclear transcription factor Y subunit B-3 (161 aa).

Residues 1–23 are disordered; the sequence is MADSDNDSGGHKDGGNASTREQD. The residue at position 2 (A2) is an N-acetylalanine. The span at 8–23 shows a compositional bias: basic and acidic residues; it reads SGGHKDGGNASTREQD. Residues 26–32 mediate DNA binding; sequence LPIANVS. The segment at 53–64 is subunit association domain (SAD); the sequence is VQECVSEFISFI. The disordered stretch occupies residues 114-146; that stretch reads EKTTTAGRQGDKEGGGGGGGAGSGSGGAPMYGG. Residues 128-146 show a composition bias toward gly residues; that stretch reads GGGGGGAGSGSGGAPMYGG.

This sequence belongs to the NFYB/HAP3 subunit family. In terms of assembly, heterotrimeric transcription factor composed of three components, NF-YA, NF-YB and NF-YC. NF-YB and NF-YC must interact and dimerize for NF-YA association and DNA binding. Component of a heat stress-inducible transcriptional complex with NF-YA and NF-YB subunits made, at least, of NFYA2, NFYB3 and DPB3-1 in cooperation with DREB2A. Binds directly with DPB3-1. Ubiquitous. Expressed in seedlings, petioles, hypocotyls, reproductive organ tissues and leaves.

The protein localises to the nucleus. It is found in the cytoplasm. It localises to the cytosol. Functionally, component of the NF-Y/HAP transcription factor complex. The NF-Y complex stimulates the transcription of various genes by recognizing and binding to a CCAAT motif in promoters. Promotes the expression of heat stress-inducible genes by contributing to the formation of a heat stress-specific transcriptional complex with NF-Y subunits (e.g. DPB3-1, NF-YA2 and NF-YB3) and DREB2A at the promoter of target genes, thus promoting heat tolerance. This Arabidopsis thaliana (Mouse-ear cress) protein is Nuclear transcription factor Y subunit B-3.